Here is a 336-residue protein sequence, read N- to C-terminus: Probable deoxyhypusine synthase (336 aa).

K308 serves as the catalytic Nucleophile.

The protein belongs to the deoxyhypusine synthase family. Requires NAD(+) as cofactor.

It carries out the reaction [eIF5A protein]-L-lysine + spermidine = [eIF5A protein]-deoxyhypusine + propane-1,3-diamine. It participates in protein modification; eIF5A hypusination. Its function is as follows. Catalyzes the NAD-dependent oxidative cleavage of spermidine and the subsequent transfer of the butylamine moiety of spermidine to the epsilon-amino group of a specific lysine residue of the eIF-5A precursor protein to form the intermediate deoxyhypusine residue. This chain is Probable deoxyhypusine synthase, found in Thermococcus gammatolerans (strain DSM 15229 / JCM 11827 / EJ3).